Reading from the N-terminus, the 567-residue chain is Glutamine--tRNA ligase (567 aa).

The short motif at 47–57 is the 'HIGH' region element; it reads PEPNGYLHIGH. Residues 48-50 and 54-60 each bind ATP; these read EPN and HIGHAKS. The L-glutamine site is built by aspartate 80 and tyrosine 225. Residues threonine 244 and 274–275 each bind ATP; that span reads RL. Positions 281–285 match the 'KMSKS' region motif; it reads ITSKR.

It belongs to the class-I aminoacyl-tRNA synthetase family. As to quaternary structure, monomer.

It localises to the cytoplasm. The enzyme catalyses tRNA(Gln) + L-glutamine + ATP = L-glutaminyl-tRNA(Gln) + AMP + diphosphate. This chain is Glutamine--tRNA ligase, found in Pseudomonas putida (strain ATCC 47054 / DSM 6125 / CFBP 8728 / NCIMB 11950 / KT2440).